The following is a 186-amino-acid chain: ADP-ribosylation factor-like protein 8A (186 aa).

The segment at residues 1 to 19 is an intramembrane region (note=Mediates targeting to membranes); the sequence is MIALFNKLLDWFKALFWKE. GTP is bound by residues 29-35, 71-75, and 130-133; these read QYSGKTT, DIGGQ, and NKRD.

This sequence belongs to the small GTPase superfamily. Arf family. In terms of assembly, interacts with PLEKHM1. When GTP-bound, interacts with RUFY3 and RUFY4, but not with RUFY1, nor RUFY2. In terms of tissue distribution, ubiquitously expressed.

Its subcellular location is the late endosome membrane. It is found in the lysosome membrane. The protein resides in the cytoplasm. The protein localises to the cytoskeleton. It localises to the spindle. Its subcellular location is the cell projection. It is found in the axon. The protein resides in the synapse. Its function is as follows. Plays a role in lysosome motility. In neurons, mediates the anterograde axonal long-range transport of presynaptic lysosome-related vesicles required for presynaptic biogenesis and synaptic function. May play a role in chromosome segregation. This Homo sapiens (Human) protein is ADP-ribosylation factor-like protein 8A (ARL8A).